We begin with the raw amino-acid sequence, 201 residues long: Small ribosomal subunit protein uS4 (201 aa).

One can recognise an S4 RNA-binding domain in the interval 92-155 (RRLDAVVYAL…QKLDIIQESV (64 aa)).

This sequence belongs to the universal ribosomal protein uS4 family. Part of the 30S ribosomal subunit. Contacts protein S5. The interaction surface between S4 and S5 is involved in control of translational fidelity.

Its function is as follows. One of the primary rRNA binding proteins, it binds directly to 16S rRNA where it nucleates assembly of the body of the 30S subunit. With S5 and S12 plays an important role in translational accuracy. This Staphylococcus carnosus (strain TM300) protein is Small ribosomal subunit protein uS4.